A 1078-amino-acid polypeptide reads, in one-letter code: DNA gyrase subunit B (1078 aa).

Residues 889 to 974 enclose the Toprim domain; it reads GKILNIEKTD…QGYIYIACPP (86 aa). Mg(2+) contacts are provided by Glu895, Asp939, and Asp941.

Belongs to the type II topoisomerase GyrB family. In terms of assembly, heterotetramer, composed of two GyrA and two GyrB chains. In the heterotetramer, GyrA contains the active site tyrosine that forms a transient covalent intermediate with DNA, while GyrB binds cofactors and catalyzes ATP hydrolysis. The cofactor is Mg(2+). This protein undergoes a protein self splicing that involves a post-translational excision of the intervening region (intein) followed by peptide ligation.

The protein localises to the cytoplasm. The enzyme catalyses ATP-dependent breakage, passage and rejoining of double-stranded DNA.. Its function is as follows. A type II topoisomerase that negatively supercoils closed circular double-stranded (ds) DNA in an ATP-dependent manner to modulate DNA topology and maintain chromosomes in an underwound state. Negative supercoiling favors strand separation, and DNA replication, transcription, recombination and repair, all of which involve strand separation. Also able to catalyze the interconversion of other topological isomers of dsDNA rings, including catenanes and knotted rings. Type II topoisomerases break and join 2 DNA strands simultaneously in an ATP-dependent manner. The chain is DNA gyrase subunit B (gyrB) from Synechocystis sp. (strain ATCC 27184 / PCC 6803 / Kazusa).